We begin with the raw amino-acid sequence, 121 residues long: Small ribosomal subunit protein uS13 (121 aa).

The disordered stretch occupies residues 97-121 (VRGQRTRTNARTRRGARKTVAGRKK). The segment covering 100-121 (QRTRTNARTRRGARKTVAGRKK) has biased composition (basic residues).

Belongs to the universal ribosomal protein uS13 family. In terms of assembly, part of the 30S ribosomal subunit. Forms a loose heterodimer with protein S19. Forms two bridges to the 50S subunit in the 70S ribosome.

In terms of biological role, located at the top of the head of the 30S subunit, it contacts several helices of the 16S rRNA. In the 70S ribosome it contacts the 23S rRNA (bridge B1a) and protein L5 of the 50S subunit (bridge B1b), connecting the 2 subunits; these bridges are implicated in subunit movement. Contacts the tRNAs in the A and P-sites. This Prochlorococcus marinus (strain NATL2A) protein is Small ribosomal subunit protein uS13.